Consider the following 260-residue polypeptide: Global transcriptional regulator CodY (260 aa).

Residues 1–159 are GAF domain; the sequence is MPNLLEKTRK…SSTVVGIQLL (159 aa). The segment at residues 207 to 226 is a DNA-binding region (H-T-H motif); sequence ASVIADRIGITRSVIVNALR.

It belongs to the CodY family.

The protein resides in the cytoplasm. In terms of biological role, DNA-binding global transcriptional regulator which is involved in the adaptive response to starvation and acts by directly or indirectly controlling the expression of numerous genes in response to nutrient availability. During rapid exponential growth, CodY is highly active and represses genes whose products allow adaptation to nutrient depletion. In Streptococcus uberis (strain ATCC BAA-854 / 0140J), this protein is Global transcriptional regulator CodY.